Reading from the N-terminus, the 22-residue chain is GVFLDALKKFAKGGMNAVLNPK.

In terms of tissue distribution, expressed by the skin glands.

Its subcellular location is the secreted. Has very strong antimicrobial activity against Gram-positive bacterium S.aureus and yeast C.albicans, and very weak activity against Gram-negative bacterium E.coli. Has strong hemolytic activity against human red blood cells. The polypeptide is Antimicrobial peptide 4 (Xenopus tropicalis (Western clawed frog)).